A 304-amino-acid chain; its full sequence is Mas-related G-protein coupled receptor member A (304 aa).

The Extracellular segment spans residues 1-17; the sequence is MDKTIPGSFNSRTLIPN. Residues 18 to 38 traverse the membrane as a helical segment; that stretch reads LLIIISGLVGLIGNAMVFWLL. Over 39–46 the chain is Cytoplasmic; that stretch reads GFRLARNA. A helical membrane pass occupies residues 47-67; it reads FSVYILNLALADFLFLLCHII. The Extracellular segment spans residues 68–80; the sequence is DSTLLLLKFSYPN. The helical transmembrane segment at 81–101 threads the bilayer; it reads IIFLPCFNTVMMVPYIAGLSM. At 102–132 the chain is on the cytoplasmic side; sequence LSAISTERCLSVVCPIWYRCRRPKHTSTVMC. Residues 133 to 153 traverse the membrane as a helical segment; the sequence is SAIWVLSLLICILNRYFCGFL. The Extracellular segment spans residues 154–167; that stretch reads DTKYEKDNRCLASN. A helical membrane pass occupies residues 168–188; the sequence is FFTAACLIFLFVVLCLSSLAL. At 189-211 the chain is on the cytoplasmic side; that stretch reads LVRLFCGAGRMKLTRLYATIMLT. A helical transmembrane segment spans residues 212–232; sequence VLVFLLCGLPFGIHWFLLIWI. The Extracellular segment spans residues 233–244; that stretch reads KIDYGKFAYGLY. A helical transmembrane segment spans residues 245–265; that stretch reads LAALVLTAVNSCANPIIYFFV. Topologically, residues 266–304 are cytoplasmic; the sequence is GSFRHQKHQTLKMVLQRALQDTPETAENTVEMSSSKVEP.

It belongs to the G-protein coupled receptor 1 family. Mas subfamily. Expressed in a subset of IB4-positive small diameter nociceptive dorsal root neurons.

It is found in the cell membrane. In terms of biological role, orphan receptor activated by a subset of RFamide-family neuropeptides such as FLRF-amide and FMRF-amide. Mediates its action by association with G proteins that activate a phosphatidylinositol-calcium second messenger system. Its effect is mediated by G(q) and G(11) proteins. May regulate the function of nociceptive neurons by modulation of pain perception. This chain is Mas-related G-protein coupled receptor member A (Mrgpra), found in Rattus norvegicus (Rat).